A 300-amino-acid chain; its full sequence is Fatty acid elongase 3 (300 aa).

A run of 3 helical transmembrane segments spans residues 31–51 (VPAVAVVLYLILVLYVPENVM), 61–81 (FLNMLWNLLLTVFSICGAYYC), and 127–147 (IFFDGFVGLWVAAFVLSKIPE). Positions 165 to 169 (HWYHH) match the HxxHH motif motif. H168 (nucleophile) is an active-site residue. 4 consecutive transmembrane segments (helical) span residues 170–190 (ATVMLFCWHAYAYTISSGLWF), 192–212 (TMNYCVHSIMYFYYFMCACGM), 219–239 (IAPLITMMQILQMVAGTLIVL), and 261–283 (MGLLMYVSYLFLFSQLYYRSYIS).

The protein belongs to the ELO family.

It is found in the endoplasmic reticulum membrane. It catalyses the reaction an acyl-CoA + malonyl-CoA + H(+) = a 3-oxoacyl-CoA + CO2 + CoA. The protein operates within lipid metabolism; fatty acid biosynthesis. Functionally, involved in the synthesis of fatty acids. Elongates C14 fatty acids to C18. Required for the maintenance of the global lipidome profile in this parasite. This is Fatty acid elongase 3 from Trypanosoma cruzi (strain CL Brener).